A 95-amino-acid chain; its full sequence is UPF0213 protein ESA_03545 (95 aa).

Residues 2-77 (EEWFLYLIRC…KQLTKRQKEQ (76 aa)) enclose the GIY-YIG domain.

The protein belongs to the UPF0213 family.

This Cronobacter sakazakii (strain ATCC BAA-894) (Enterobacter sakazakii) protein is UPF0213 protein ESA_03545.